Consider the following 254-residue polypeptide: Sec-independent protein translocase protein TatCy (254 aa).

The next 6 helical transmembrane spans lie at isoleucine 24–isoleucine 44, leucine 67–leucine 87, valine 112–valine 132, phenylalanine 157–phenylalanine 177, methionine 187–isoleucine 207, and leucine 212–isoleucine 232.

This sequence belongs to the TatC family. As to quaternary structure, forms a complex with TatAy. Two types of complexes exist: one composed of TatAy and TatCy, and another composed only of TatAy.

The protein localises to the cell membrane. Part of the twin-arginine translocation (Tat) system that transports large folded proteins containing a characteristic twin-arginine motif in their signal peptide across membranes. Required for YwbN secretion. In Bacillus subtilis (strain 168), this protein is Sec-independent protein translocase protein TatCy.